A 290-amino-acid polypeptide reads, in one-letter code: tRNA-cytidine(32) 2-sulfurtransferase (290 aa).

Residues 66–71 (SGGKDS) carry the PP-loop motif motif. [4Fe-4S] cluster is bound by residues cysteine 141, cysteine 144, and cysteine 232.

It belongs to the TtcA family. Homodimer. Requires Mg(2+) as cofactor. The cofactor is [4Fe-4S] cluster.

It is found in the cytoplasm. The catalysed reaction is cytidine(32) in tRNA + S-sulfanyl-L-cysteinyl-[cysteine desulfurase] + AH2 + ATP = 2-thiocytidine(32) in tRNA + L-cysteinyl-[cysteine desulfurase] + A + AMP + diphosphate + H(+). The protein operates within tRNA modification. Catalyzes the ATP-dependent 2-thiolation of cytidine in position 32 of tRNA, to form 2-thiocytidine (s(2)C32). The sulfur atoms are provided by the cysteine/cysteine desulfurase (IscS) system. The sequence is that of tRNA-cytidine(32) 2-sulfurtransferase from Rhizobium etli (strain ATCC 51251 / DSM 11541 / JCM 21823 / NBRC 15573 / CFN 42).